Consider the following 437-residue polypeptide: Glutamate-1-semialdehyde 2,1-aminomutase (437 aa).

At Lys-274 the chain carries N6-(pyridoxal phosphate)lysine.

It belongs to the class-III pyridoxal-phosphate-dependent aminotransferase family. HemL subfamily. In terms of assembly, homodimer. It depends on pyridoxal 5'-phosphate as a cofactor.

It is found in the cytoplasm. It carries out the reaction (S)-4-amino-5-oxopentanoate = 5-aminolevulinate. The protein operates within porphyrin-containing compound metabolism; protoporphyrin-IX biosynthesis; 5-aminolevulinate from L-glutamyl-tRNA(Glu): step 2/2. In Paracidovorax citrulli (strain AAC00-1) (Acidovorax citrulli), this protein is Glutamate-1-semialdehyde 2,1-aminomutase.